Consider the following 597-residue polypeptide: Elongation factor 4 (597 aa).

In terms of domain architecture, tr-type G spans Lys-2–Thr-184. GTP contacts are provided by residues Asp-14 to Thr-19 and Asn-131 to Asp-134.

It belongs to the TRAFAC class translation factor GTPase superfamily. Classic translation factor GTPase family. LepA subfamily.

It localises to the cell inner membrane. The enzyme catalyses GTP + H2O = GDP + phosphate + H(+). Its function is as follows. Required for accurate and efficient protein synthesis under certain stress conditions. May act as a fidelity factor of the translation reaction, by catalyzing a one-codon backward translocation of tRNAs on improperly translocated ribosomes. Back-translocation proceeds from a post-translocation (POST) complex to a pre-translocation (PRE) complex, thus giving elongation factor G a second chance to translocate the tRNAs correctly. Binds to ribosomes in a GTP-dependent manner. The chain is Elongation factor 4 from Neisseria meningitidis serogroup C (strain 053442).